A 270-amino-acid polypeptide reads, in one-letter code: Short chain dehydrogenase/reductase dpfgG (270 aa).

Residues isoleucine 18, aspartate 69, asparagine 96, lysine 130, lysine 171, isoleucine 200, and asparagine 204 each contribute to the NADP(+) site. Lysine 171 acts as the Lowers pKa of active site Tyr in catalysis.

Belongs to the short-chain dehydrogenases/reductases (SDR) family.

Its pathway is secondary metabolite biosynthesis; terpenoid biosynthesis. Functionally, short chain dehydrogenase/reductase; part of the gene cluster that mediates the biosynthesis of diterpenoid pyrones. The first step of the pathway is the synthesis of the alpha-pyrone moiety by the polyketide synthase dpfgA via condensation of one acetyl-CoA starter unit with 3 malonyl-CoA units and 2 methylations. The alpha-pyrone is then combined with geranylgeranyl pyrophosphate (GGPP) formed by the GGPP synthase dpfgD through the action of the prenyltransferase dpfgC to yield a linear alpha-pyrone diterpenoid. Subsequent steps in the diterpenoid pyrone biosynthetic pathway involve the decalin core formation, which is initiated by the epoxidation of the C10-C11 olefin by the FAD-dependent oxidoreductase dpfgE, and is followed by a cyclization cascade catalyzed by the terpene cyclase dpfgB. The short chain dehydrogenase/reductase dpfgG then oxidizes the 8S hydroxy group to a ketone and the short chain dehydrogenase/reductase dpfgH reduces the ketone to the 8R hydroxy group to yield higginsianin B. Higginsianin B is further methylated by the methyltransferase dpfgI to produce the intermediate named FDDP B. The cytochrome P450 monooxygenase dfgpJ then catalyzes a three-step oxidation at C-27 to generate a carboxylic acid as well as C-26 hydroxylation. Finally, methyltransferase dpfgK methylates the carboxylic acid generated by dpfgJ, yielding the final diterpenoid pyrones from the pathway which were named FDDP D and FDDP E. This is Short chain dehydrogenase/reductase dpfgG from Gibberella zeae (strain ATCC MYA-4620 / CBS 123657 / FGSC 9075 / NRRL 31084 / PH-1) (Wheat head blight fungus).